A 389-amino-acid chain; its full sequence is Succinate--CoA ligase [ADP-forming] subunit beta (389 aa).

In terms of domain architecture, ATP-grasp spans 9–244 (KEILRKFGVA…LDEEDPAEVE (236 aa)). ATP is bound by residues Lys46, 53-55 (GRG), Glu99, Ala102, and Glu107. Residues Asn199 and Asp213 each contribute to the Mg(2+) site. Residues Asn264 and 321–323 (GIM) contribute to the substrate site.

Belongs to the succinate/malate CoA ligase beta subunit family. As to quaternary structure, heterotetramer of two alpha and two beta subunits. Requires Mg(2+) as cofactor.

It carries out the reaction succinate + ATP + CoA = succinyl-CoA + ADP + phosphate. It catalyses the reaction GTP + succinate + CoA = succinyl-CoA + GDP + phosphate. Its pathway is carbohydrate metabolism; tricarboxylic acid cycle; succinate from succinyl-CoA (ligase route): step 1/1. Functionally, succinyl-CoA synthetase functions in the citric acid cycle (TCA), coupling the hydrolysis of succinyl-CoA to the synthesis of either ATP or GTP and thus represents the only step of substrate-level phosphorylation in the TCA. The beta subunit provides nucleotide specificity of the enzyme and binds the substrate succinate, while the binding sites for coenzyme A and phosphate are found in the alpha subunit. This chain is Succinate--CoA ligase [ADP-forming] subunit beta, found in Paraburkholderia phytofirmans (strain DSM 17436 / LMG 22146 / PsJN) (Burkholderia phytofirmans).